A 129-amino-acid chain; its full sequence is Small ribosomal subunit protein uS11 (129 aa).

It belongs to the universal ribosomal protein uS11 family. Part of the 30S ribosomal subunit. Interacts with proteins S7 and S18. Binds to IF-3.

Located on the platform of the 30S subunit, it bridges several disparate RNA helices of the 16S rRNA. Forms part of the Shine-Dalgarno cleft in the 70S ribosome. The chain is Small ribosomal subunit protein uS11 from Desulfovibrio desulfuricans (strain ATCC 27774 / DSM 6949 / MB).